Consider the following 225-residue polypeptide: NAD(P)H-quinone oxidoreductase subunit K, chloroplastic (225 aa).

[4Fe-4S] cluster contacts are provided by cysteine 43, cysteine 44, cysteine 108, and cysteine 139.

It belongs to the complex I 20 kDa subunit family. In terms of assembly, NDH is composed of at least 16 different subunits, 5 of which are encoded in the nucleus. [4Fe-4S] cluster serves as cofactor.

It localises to the plastid. The protein localises to the chloroplast thylakoid membrane. It carries out the reaction a plastoquinone + NADH + (n+1) H(+)(in) = a plastoquinol + NAD(+) + n H(+)(out). The enzyme catalyses a plastoquinone + NADPH + (n+1) H(+)(in) = a plastoquinol + NADP(+) + n H(+)(out). Functionally, NDH shuttles electrons from NAD(P)H:plastoquinone, via FMN and iron-sulfur (Fe-S) centers, to quinones in the photosynthetic chain and possibly in a chloroplast respiratory chain. The immediate electron acceptor for the enzyme in this species is believed to be plastoquinone. Couples the redox reaction to proton translocation, and thus conserves the redox energy in a proton gradient. The protein is NAD(P)H-quinone oxidoreductase subunit K, chloroplastic of Nymphaea alba (White water-lily).